The primary structure comprises 382 residues: Mannitol-1-phosphate 5-dehydrogenase (382 aa).

Residue 3–14 coordinates NAD(+); that stretch reads ALHFGAGNIGRG.

Belongs to the mannitol dehydrogenase family.

It carries out the reaction D-mannitol 1-phosphate + NAD(+) = beta-D-fructose 6-phosphate + NADH + H(+). In Erwinia tasmaniensis (strain DSM 17950 / CFBP 7177 / CIP 109463 / NCPPB 4357 / Et1/99), this protein is Mannitol-1-phosphate 5-dehydrogenase.